A 1085-amino-acid polypeptide reads, in one-letter code: Solute carrier family 12 member 4 (1085 aa).

At 1–119 the chain is on the cytoplasmic side; sequence MPHFTVVPVD…RRAAKAPSMG (119 aa). Residues S24, S47, S81, and S88 each carry the phosphoserine modification. A discontinuously helical transmembrane segment spans residues 120 to 141; the sequence is TLMGVYLPCLQNIFGVILFLRL. Positions 131 and 132 each coordinate K(+). Residues 142 to 149 are Extracellular-facing; sequence TWMVGTAG. The helical transmembrane segment at 150–172 threads the bilayer; that stretch reads VLQALLIVLICCCCTLLTAISMS. At 173–196 the chain is on the cytoplasmic side; sequence AIATNGVVPAGGSYFMISRSLGPE. Residues 197–225 traverse the membrane as a helical segment; the sequence is FGGAVGLCFYLGTTFAAAMYILGAIEILL. Y216 lines the K(+) pocket. Residues 226-248 are Extracellular-facing; it reads TYIAPPAAIFYPSGTHDMSSATL. The next 2 membrane-spanning stretches (helical) occupy residues 249-271 and 272-297; these read NNMR…VGVK and YVNK…GGIK. At 298-419 the chain is on the extracellular side; the sequence is SIFDPPVFPV…LYVVADIATS (122 aa). C308 and C323 form a disulfide bridge. N-linked (GlcNAc...) asparagine glycosylation is found at N312, N331, and N347. Cysteines 343 and 353 form a disulfide. A helical membrane pass occupies residues 420-440; that stretch reads FTVLVGIFFPSVTGIMAGSNR. K(+) is bound by residues P429 and T432. Residues G433, I434, and M435 each contribute to the chloride site. Residues 441–450 are Cytoplasmic-facing; it reads SGDLRDAQKS. Residues 451–473 form a helical membrane-spanning segment; sequence IPVGTILAIVTTSLVYFSSVILF. Over 474–504 the chain is Extracellular; sequence GACIEGVVLRDKYGDGVSRNLVVGTLAWPSP. A helical transmembrane segment spans residues 505 to 531; it reads WVIVVGSFFSTCGAGLQSLTGAPRLLQ. The Cytoplasmic segment spans residues 532 to 554; it reads AIAKDNIIPFLRVFGHGKANGEP. A run of 2 helical transmembrane segments spans residues 555–575 and 576–598; these read TWAL…ASLD and MVAP…ACAV. A chloride-binding site is contributed by Y589. Residues 599–612 are Cytoplasmic-facing; the sequence is QTLLRTPNWRPRFK. Transmembrane regions (helical) follow at residues 613-635 and 636-651; these read YYHW…VSSW and YYAL…IYKY. At 652-1085 the chain is on the cytoplasmic side; that stretch reads IEYQGAEKEW…GGREVITIYS (434 aa). Residues 665–681 are scissor helix; that stretch reads IRGLSLSAARYALLRLE. ATP is bound by residues L697, K699, K707, Y708, and V730. S734 bears the Phosphoserine mark. ATP-binding residues include G794, W795, and Y797. 2 positions are modified to phosphoserine: S916 and S967. T983 bears the Phosphothreonine mark. S1050 carries the post-translational modification Phosphoserine.

The protein belongs to the SLC12A transporter family. K/Cl co-transporter subfamily. As to quaternary structure, homodimer; adopts a domain-swap conformation at the scissor helices connecting the transmembrane domain and C-terminal domain. Heterodimer with other K-Cl cotransporters. Phosphorylated, phosphorylation may regulate transporter activity. As to expression, detected in embryo, adult heart, erythrocytes, brain, kidney, stomach, ovary, testis and liver.

Its subcellular location is the cell membrane. The catalysed reaction is K(+)(in) + chloride(in) = K(+)(out) + chloride(out). With respect to regulation, inhibited by WNK3. Mediates electroneutral potassium-chloride cotransport when activated by cell swelling. May contribute to cell volume homeostasis in single cells. May be involved in the regulation of basolateral Cl(-) exit in NaCl absorbing epithelia. The polypeptide is Solute carrier family 12 member 4 (Slc12a4) (Mus musculus (Mouse)).